Reading from the N-terminus, the 130-residue chain is MAKPTKKTGSKKTKRNVPNGVAHIQSTFNNTIVSIADTAGEVIAWSSAGASGFKGARKGTPFAAQTAAEAAARRALEQGMRQIEVLVRGPGSGRETAIRALQVAGLEITLIRDVTPLPHNGCRRPKRRRV.

It belongs to the universal ribosomal protein uS11 family. In terms of assembly, part of the 30S ribosomal subunit. Interacts with proteins S7 and S18. Binds to IF-3.

Its function is as follows. Located on the platform of the 30S subunit, it bridges several disparate RNA helices of the 16S rRNA. Forms part of the Shine-Dalgarno cleft in the 70S ribosome. In Prochlorococcus marinus (strain MIT 9313), this protein is Small ribosomal subunit protein uS11.